Consider the following 339-residue polypeptide: N-acetyl-gamma-glutamyl-phosphate reductase (339 aa).

Cys-145 is a catalytic residue.

Belongs to the NAGSA dehydrogenase family. Type 1 subfamily.

Its subcellular location is the cytoplasm. It carries out the reaction N-acetyl-L-glutamate 5-semialdehyde + phosphate + NADP(+) = N-acetyl-L-glutamyl 5-phosphate + NADPH + H(+). It functions in the pathway amino-acid biosynthesis; L-arginine biosynthesis; N(2)-acetyl-L-ornithine from L-glutamate: step 3/4. Its function is as follows. Catalyzes the NADPH-dependent reduction of N-acetyl-5-glutamyl phosphate to yield N-acetyl-L-glutamate 5-semialdehyde. In Kosmotoga olearia (strain ATCC BAA-1733 / DSM 21960 / TBF 19.5.1), this protein is N-acetyl-gamma-glutamyl-phosphate reductase.